The sequence spans 575 residues: 3-hydroxy-3-methylglutaryl-coenzyme A reductase 1 (575 aa).

A compositionally biased stretch (basic residues) spans 1–13 (MDTTGRLHHRKHA). The tract at residues 1–25 (MDTTGRLHHRKHATPVEDRSPTTPK) is disordered. 2 helical membrane-spanning segments follow: residues 29–49 (ALPLPLYLTNAVFFTLFFSVA) and 73–93 (EIVAIVSLIASFIYLLGFFGI). The tract at residues 97 to 160 (QSFIARASHD…PLIAPLVSEE (64 aa)) is linker. An N-linked (GlcNAc...) asparagine glycan is attached at asparagine 132. The tract at residues 161-575 (DEMIVNSVVD…SSKDMSKAAS (415 aa)) is catalytic. Glutamate 254 serves as the catalytic Charge relay system. The N-linked (GlcNAc...) asparagine glycan is linked to asparagine 318. Active-site charge relay system residues include lysine 386 and aspartate 462. A helical transmembrane segment spans residues 531–551 (LLAAIVAGSVLAGELSLMSAI). Histidine 560 acts as the Proton donor in catalysis. N-linked (GlcNAc...) asparagine glycosylation occurs at asparagine 564.

The protein belongs to the HMG-CoA reductase family.

The protein localises to the endoplasmic reticulum membrane. Its subcellular location is the mitochondrion membrane. It is found in the plastid membrane. The enzyme catalyses (R)-mevalonate + 2 NADP(+) + CoA = (3S)-3-hydroxy-3-methylglutaryl-CoA + 2 NADPH + 2 H(+). The protein operates within metabolic intermediate biosynthesis; (R)-mevalonate biosynthesis; (R)-mevalonate from acetyl-CoA: step 3/3. Functionally, catalyzes the synthesis of mevalonate. The specific precursor of all isoprenoid compounds present in plants. The sequence is that of 3-hydroxy-3-methylglutaryl-coenzyme A reductase 1 (HMGR1) from Hevea brasiliensis (Para rubber tree).